The primary structure comprises 82 residues: U24 protein (82 aa).

Residues 7–10 (PPSY) carry the PPXY motif motif. A helical transmembrane segment spans residues 52–72 (FIILACLIISVILCLILILHI).

In terms of assembly, interacts with host ITCH; this interaction probably mediates ITCH degradation. Interacts probably with NEDD4.

The protein localises to the membrane. In terms of biological role, down-regulates of the TCR/CD3E complex and the transferrin receptor TFRC in host T-cells by blocking them from recycling back to the cell surface. The polypeptide is U24 protein (Homo sapiens (Human)).